A 542-amino-acid polypeptide reads, in one-letter code: Zinc finger protein 280A (542 aa).

The segment at 66 to 185 is disordered; the sequence is VTPGSNSRRK…RDSKRVKLRD (120 aa). Polar residues predominate over residues 107–122; it reads EGRSTDSPVTMKSSSE. Over residues 128 to 143 the composition is skewed to low complexity; the sequence is SSPQVVSPSSSDSLPP. Residues 161-185 are compositionally biased toward basic and acidic residues; the sequence is SSPDSKRLSTSDINSRDSKRVKLRD. C2H2-type zinc fingers lie at residues 334–357, 364–387, 423–445, and 451–474; these read TTCQ…DSVH, AVCK…KDHH, LLCL…CWRH, and LQCS…TKDH. Positions 499–520 are enriched in polar residues; sequence QPGSSGMASVIVSNTDPQSSPV. The disordered stretch occupies residues 499–542; that stretch reads QPGSSGMASVIVSNTDPQSSPVKTKKKTAMNTRDSRLPCSKDSS.

It localises to the nucleus. May function as a transcription factor. The protein is Zinc finger protein 280A (ZNF280A) of Homo sapiens (Human).